Reading from the N-terminus, the 201-residue chain is Imidazole glycerol phosphate synthase subunit HisH (201 aa).

The region spanning 1-201 is the Glutamine amidotransferase type-1 domain; that stretch reads MVFIADYGAG…LQVLRNFAEC (201 aa). The Nucleophile role is filled by C79. Residues H183 and E185 contribute to the active site.

As to quaternary structure, heterodimer of HisH and HisF.

It localises to the cytoplasm. The enzyme catalyses 5-[(5-phospho-1-deoxy-D-ribulos-1-ylimino)methylamino]-1-(5-phospho-beta-D-ribosyl)imidazole-4-carboxamide + L-glutamine = D-erythro-1-(imidazol-4-yl)glycerol 3-phosphate + 5-amino-1-(5-phospho-beta-D-ribosyl)imidazole-4-carboxamide + L-glutamate + H(+). It carries out the reaction L-glutamine + H2O = L-glutamate + NH4(+). Its pathway is amino-acid biosynthesis; L-histidine biosynthesis; L-histidine from 5-phospho-alpha-D-ribose 1-diphosphate: step 5/9. IGPS catalyzes the conversion of PRFAR and glutamine to IGP, AICAR and glutamate. The HisH subunit catalyzes the hydrolysis of glutamine to glutamate and ammonia as part of the synthesis of IGP and AICAR. The resulting ammonia molecule is channeled to the active site of HisF. This is Imidazole glycerol phosphate synthase subunit HisH from Chlorobium luteolum (strain DSM 273 / BCRC 81028 / 2530) (Pelodictyon luteolum).